The following is a 280-amino-acid chain: Bifunctional protein FolD (280 aa).

NADP(+) is bound by residues 165–167 (GRS), S190, and I231.

Belongs to the tetrahydrofolate dehydrogenase/cyclohydrolase family. Homodimer.

The catalysed reaction is (6R)-5,10-methylene-5,6,7,8-tetrahydrofolate + NADP(+) = (6R)-5,10-methenyltetrahydrofolate + NADPH. The enzyme catalyses (6R)-5,10-methenyltetrahydrofolate + H2O = (6R)-10-formyltetrahydrofolate + H(+). The protein operates within one-carbon metabolism; tetrahydrofolate interconversion. Its function is as follows. Catalyzes the oxidation of 5,10-methylenetetrahydrofolate to 5,10-methenyltetrahydrofolate and then the hydrolysis of 5,10-methenyltetrahydrofolate to 10-formyltetrahydrofolate. This is Bifunctional protein FolD from Moorella thermoacetica (strain ATCC 39073 / JCM 9320).